The chain runs to 497 residues: MNYFPWLTLVVILPIAGGSLIFLFPHRGNKVIRWYTVCICLIDLLLTTYAFCYHFQLDDPLIQLTESYKWINFFDFYWRFGIDGLSIGPILLTGFITTLATLAAQPITRECKLFYFLMLAMYSGQIGPFSSRDILLFFIMWELELIPVYLLLAMWGGKKRLYSATKFILYTAGSSVFLLMATLGIGLYGSNEPTLNFETLNNQSYPLALEIIVYIGFLIAFAVKSPIIPLHTWLPDTHGEAHYSTCMLLAGILLKMGAYGLVRINMELFSHAHSIFCPWLMILGSIQIIYAASASLGQRNLKKRIAYSSVSHMGFLIIGIGSISDTGLNGAILQIISHGFIGAALFFLSGTSYDRLRLLYLDEMGGMALPMPKIFTVFTILSMASLALPGMSGFFAELIVFWGIITSQKYFLIMKILITFVTAIGMILTPIYSLSILRQMFYGYKFFNTPNSYFFDSGPRELFISISILIPIIGIGIYPDFIFSFSVDKVEAVLSHF.

14 helical membrane passes run F4–F24, Y35–F55, G84–A104, C111–S131, I134–M154, F167–L187, A208–I228, H242–V262, S274–A294, I305–D325, G330–G350, L386–T406, F411–I431, and F463–F483.

The protein belongs to the complex I subunit 4 family.

It is found in the plastid. The protein resides in the chloroplast thylakoid membrane. The catalysed reaction is a plastoquinone + NADH + (n+1) H(+)(in) = a plastoquinol + NAD(+) + n H(+)(out). It catalyses the reaction a plastoquinone + NADPH + (n+1) H(+)(in) = a plastoquinol + NADP(+) + n H(+)(out). This chain is NAD(P)H-quinone oxidoreductase chain 4, chloroplastic (ndhD), found in Lotus japonicus (Lotus corniculatus var. japonicus).